The following is an 84-amino-acid chain: MKVSVLITLAVLGVMFLFTSAEERGSDQMDSPAWLKSMEIIFQSEERECRWLFGGCEKDSDCCEHLGCRRAKPSWCGWDFTVGK.

Residues 1–21 (MKVSVLITLAVLGVMFLFTSA) form the signal peptide. Positions 22-47 (EERGSDQMDSPAWLKSMEIIFQSEER) are excised as a propeptide. 3 disulfides stabilise this stretch: Cys-49-Cys-63, Cys-56-Cys-68, and Cys-62-Cys-76. The residue at position 82 (Val-82) is a Valine amide.

The protein belongs to the neurotoxin 10 (Hwtx-1) family. 05 (F4a) subfamily. In terms of tissue distribution, expressed by the venom gland.

The protein resides in the secreted. Functionally, probable ion channel inhibitor. The protein is U21-theraphotoxin-Cg1a 2 of Chilobrachys guangxiensis (Chinese earth tiger tarantula).